The sequence spans 1530 residues: B-cell CLL/lymphoma 9-like protein (1530 aa).

8 disordered regions span residues 1–101 (MHSE…VLEP), 155–187 (QGHS…TDLH), 246–353 (HISS…PSVL), 398–439 (SGTG…IGGG), 473–503 (QTQN…LSSP), 821–1076 (QNGR…QNPL), 1250–1279 (KGMS…SEVI), and 1310–1331 (SETM…QVSS). Polar residues predominate over residues 8–18 (SNHGKQVTSGA). Residues 19–34 (QSQLPNVNQAQQQAPA) are compositionally biased toward low complexity. The segment covering 81-93 (ERSVSIDTGDQRE) has biased composition (basic and acidic residues). Positions 156–165 (GHSGSSTTGH) are enriched in low complexity. Residues 170–180 (GGPGLGSGHGP) are compositionally biased toward gly residues. 2 stretches are compositionally biased toward polar residues: residues 247 to 264 (ISSS…QSGT) and 278 to 287 (GTSTPSSTGH). Composition is skewed to low complexity over residues 409 to 426 (GPNG…NSND) and 485 to 503 (SLMG…LSSP). 3 stretches are compositionally biased toward polar residues: residues 875-891 (LSST…TGSR), 920-930 (QLKSPSLSQEP), and 944-953 (SPSQLPQSGP). Low complexity-rich tracts occupy residues 960–971 (AASGAGTPSSTS), 979–994 (GPSL…PGHL), and 1031–1060 (SSST…INPS). Residues 1258-1268 (PHQPDSFPPMP) are compositionally biased toward pro residues.

Belongs to the BCL9 family.

The protein resides in the nucleus. In terms of biological role, transcriptional regulator that may act as an activator. Plays a role for mesoderm patterning in early embryogenesis. The chain is B-cell CLL/lymphoma 9-like protein (bcl9l) from Danio rerio (Zebrafish).